Here is a 147-residue protein sequence, read N- to C-terminus: Transcriptional regulator MraZ (147 aa).

SpoVT-AbrB domains lie at 5–52 (SHAI…PETE) and 81–124 (ATTL…SEEA).

Belongs to the MraZ family. Forms oligomers.

The protein localises to the cytoplasm. It is found in the nucleoid. The protein is Transcriptional regulator MraZ of Saccharophagus degradans (strain 2-40 / ATCC 43961 / DSM 17024).